A 409-amino-acid chain; its full sequence is Argininosuccinate synthase (409 aa).

ATP-binding positions include 12 to 20 (AYSGGLDTS) and Ala39. L-citrulline is bound at residue Tyr91. Gly121 is an ATP binding site. Residues Thr123, Asn127, and Asp128 each contribute to the L-aspartate site. Asn127 serves as a coordination point for L-citrulline. Residues Arg131, Ser180, Ser189, Glu265, and Tyr277 each coordinate L-citrulline.

This sequence belongs to the argininosuccinate synthase family. Type 1 subfamily. Homotetramer.

The protein localises to the cytoplasm. The catalysed reaction is L-citrulline + L-aspartate + ATP = 2-(N(omega)-L-arginino)succinate + AMP + diphosphate + H(+). The protein operates within amino-acid biosynthesis; L-arginine biosynthesis; L-arginine from L-ornithine and carbamoyl phosphate: step 2/3. The sequence is that of Argininosuccinate synthase from Buchnera aphidicola subsp. Baizongia pistaciae (strain Bp).